The chain runs to 335 residues: MLDLAYLQTAPEQTALLKQQATDFIVREELGYPLSGDGEFAAVKIRKTNANTIWAGEQLAKFCGISVRNMSYAGLKDRNAITDQWFSLHMPGKPTPDFSRFRIEGIEILEVTRHNRKIRTGSLQGNHFDILLRNADATEELNRRLNLVKRLGFPNYFTEQRFGRDGHNLTEAMRWAKGEIQVKDRKKRSFYLSAARGEVFNLVVSDRLQMGLATQVMPNDILQLAGSHSWFQANEKEDLNALQVRLEHHDILLTAPLIGDPPQSANALENQVVAQHQALLTLMKREHLKPARRPLLMRAQNLNWQFEPTGLRLQFFLPAGSYATALIRELVRVVD.

Residue D77 is the Nucleophile of the active site. The region spanning 152–308 is the TRUD domain; the sequence is GFPNYFTEQR…AQNLNWQFEP (157 aa).

The protein belongs to the pseudouridine synthase TruD family.

The enzyme catalyses uridine(13) in tRNA = pseudouridine(13) in tRNA. Responsible for synthesis of pseudouridine from uracil-13 in transfer RNAs. This is tRNA pseudouridine synthase D from Actinobacillus succinogenes (strain ATCC 55618 / DSM 22257 / CCUG 43843 / 130Z).